We begin with the raw amino-acid sequence, 300 residues long: UPF0761 membrane protein PSHAa0171 (300 aa).

Transmembrane regions (helical) follow at residues 47–67 (LLSL…FPGF), 100–120 (NANQ…LLLI), 143–163 (FAVY…SIAV), 181–201 (FSGF…FIML), 215–235 (AIPG…GFAL), and 249–269 (AVAT…VVLL).

This sequence belongs to the UPF0761 family.

The protein localises to the cell inner membrane. This chain is UPF0761 membrane protein PSHAa0171, found in Pseudoalteromonas translucida (strain TAC 125).